Consider the following 85-residue polypeptide: MEEKQIMAFRDEEGNKVEFEVVAKIYLGEKNKKEYIVLSPVEGNGDEADDFVFRVDKVNDSVEYNLVEDDEEFRLVKKEYKKLLY.

Belongs to the UPF0473 family.

The sequence is that of UPF0473 protein CPR_1590 from Clostridium perfringens (strain SM101 / Type A).